A 621-amino-acid polypeptide reads, in one-letter code: tRNA uridine 5-carboxymethylaminomethyl modification enzyme MnmG (621 aa).

11–16 serves as a coordination point for FAD; sequence GAGHAG. 271 to 285 contacts NAD(+); that stretch reads GPRYCPSVEDKINRF.

This sequence belongs to the MnmG family. Homodimer. Heterotetramer of two MnmE and two MnmG subunits. FAD serves as cofactor.

It localises to the cytoplasm. NAD-binding protein involved in the addition of a carboxymethylaminomethyl (cmnm) group at the wobble position (U34) of certain tRNAs, forming tRNA-cmnm(5)s(2)U34. In Cytophaga hutchinsonii (strain ATCC 33406 / DSM 1761 / CIP 103989 / NBRC 15051 / NCIMB 9469 / D465), this protein is tRNA uridine 5-carboxymethylaminomethyl modification enzyme MnmG.